We begin with the raw amino-acid sequence, 258 residues long: Aspartate/glutamate leucyltransferase (258 aa).

Belongs to the R-transferase family. Bpt subfamily.

It localises to the cytoplasm. The enzyme catalyses N-terminal L-glutamyl-[protein] + L-leucyl-tRNA(Leu) = N-terminal L-leucyl-L-glutamyl-[protein] + tRNA(Leu) + H(+). The catalysed reaction is N-terminal L-aspartyl-[protein] + L-leucyl-tRNA(Leu) = N-terminal L-leucyl-L-aspartyl-[protein] + tRNA(Leu) + H(+). In terms of biological role, functions in the N-end rule pathway of protein degradation where it conjugates Leu from its aminoacyl-tRNA to the N-termini of proteins containing an N-terminal aspartate or glutamate. This chain is Aspartate/glutamate leucyltransferase, found in Bradyrhizobium sp. (strain ORS 278).